The sequence spans 214 residues: ATP phosphoribosyltransferase (214 aa).

It belongs to the ATP phosphoribosyltransferase family. Short subfamily. Heteromultimer composed of HisG and HisZ subunits.

The protein resides in the cytoplasm. The enzyme catalyses 1-(5-phospho-beta-D-ribosyl)-ATP + diphosphate = 5-phospho-alpha-D-ribose 1-diphosphate + ATP. It functions in the pathway amino-acid biosynthesis; L-histidine biosynthesis; L-histidine from 5-phospho-alpha-D-ribose 1-diphosphate: step 1/9. In terms of biological role, catalyzes the condensation of ATP and 5-phosphoribose 1-diphosphate to form N'-(5'-phosphoribosyl)-ATP (PR-ATP). Has a crucial role in the pathway because the rate of histidine biosynthesis seems to be controlled primarily by regulation of HisG enzymatic activity. In Nostoc punctiforme (strain ATCC 29133 / PCC 73102), this protein is ATP phosphoribosyltransferase.